Consider the following 81-residue polypeptide: Extracellular matrix regulatory protein B (81 aa).

Functionally, regulates the biosynthesis of the extracellular matrix and the biofilm formation. May act as an enhancer of biofilm gene expression. Acts in parallel to the pathway that governs SinR derepression. The polypeptide is Extracellular matrix regulatory protein B (Bacillus subtilis (strain 168)).